A 247-amino-acid polypeptide reads, in one-letter code: Small ribosomal subunit protein uS2 (247 aa).

It belongs to the universal ribosomal protein uS2 family.

This Pseudomonas syringae pv. tomato (strain ATCC BAA-871 / DC3000) protein is Small ribosomal subunit protein uS2.